The chain runs to 168 residues: Peroxynitrite isomerase (168 aa).

The GXWXGXG signature appears at 25 to 31 (GTWRGAG). H160 contributes to the heme b binding site.

This sequence belongs to the nitrobindin family. As to quaternary structure, homodimer. Requires heme b as cofactor.

The enzyme catalyses peroxynitrite = nitrate. Its pathway is nitrogen metabolism. Its function is as follows. Heme-binding protein able to scavenge peroxynitrite and to protect free L-tyrosine against peroxynitrite-mediated nitration, by acting as a peroxynitrite isomerase that converts peroxynitrite to nitrate. Therefore, this protein likely plays a role in peroxynitrite sensing and in the detoxification of reactive nitrogen and oxygen species (RNS and ROS, respectively). Is able to bind nitric oxide (NO) in vitro, but may act as a sensor of peroxynitrite levels in vivo. This Nocardia farcinica (strain IFM 10152) protein is Peroxynitrite isomerase.